The chain runs to 252 residues: MSRKPIIAGNWKMNKNPQEAKAFVEAVASKLPSTDLVDVAVAAPAVDLVTTIEAAKDSVLKVAAQNCYFENTGAFTGETSPKVLAEMGADYVVIGHSERRDYFHETDEDINKKAKAIFANGLTPIVCCGESLETYEAGKAVEFVGAQVSAALAGLSAEQVASLVLAYEPIWAIGTGKSATQDDAQNMCKAVRDVVAADFGQEVADKVRVQYGGSVKPENVKDYMACPDVDGALVGGASLEAGSFLALLDFLN.

10–12 (NWK) is a binding site for substrate. Histidine 96 acts as the Electrophile in catalysis. Glutamate 168 acts as the Proton acceptor in catalysis. Residues glycine 174, serine 214, and 235–236 (GG) each bind substrate.

This sequence belongs to the triosephosphate isomerase family. Homodimer.

Its subcellular location is the cytoplasm. It catalyses the reaction D-glyceraldehyde 3-phosphate = dihydroxyacetone phosphate. The protein operates within carbohydrate biosynthesis; gluconeogenesis. It functions in the pathway carbohydrate degradation; glycolysis; D-glyceraldehyde 3-phosphate from glycerone phosphate: step 1/1. Involved in the gluconeogenesis. Catalyzes stereospecifically the conversion of dihydroxyacetone phosphate (DHAP) to D-glyceraldehyde-3-phosphate (G3P). This Streptococcus pyogenes serotype M5 (strain Manfredo) protein is Triosephosphate isomerase.